Consider the following 106-residue polypeptide: ATP-dependent Clp protease adapter protein ClpS (106 aa).

A disordered region spans residues 1 to 20 (MKVDMSTSVKDDAQLEASRV).

Belongs to the ClpS family. Binds to the N-terminal domain of the chaperone ClpA.

Functionally, involved in the modulation of the specificity of the ClpAP-mediated ATP-dependent protein degradation. In Chromobacterium violaceum (strain ATCC 12472 / DSM 30191 / JCM 1249 / CCUG 213 / NBRC 12614 / NCIMB 9131 / NCTC 9757 / MK), this protein is ATP-dependent Clp protease adapter protein ClpS.